The chain runs to 258 residues: uncharacterized protein (258 aa).

Over residues 40-54 (AQKTDTPLDSSSYAV) the composition is skewed to polar residues. The interval 40 to 63 (AQKTDTPLDSSSYAVTSPEEAPNE) is disordered.

This is an uncharacterized protein from Treponema pallidum (strain Nichols).